The sequence spans 734 residues: Polyribonucleotide nucleotidyltransferase (734 aa).

2 residues coordinate Mg(2+): Asp-497 and Asp-503. The 60-residue stretch at 564 to 623 folds into the KH domain; it reads PRIIHITIDPDKIRDVIGPGGKVIKKIVEETGAEIDIEDDGRVFIAAVDQEKGRKAQEII. The region spanning 633–707 is the S1 motif domain; that stretch reads GEIYTGRVTR…SQGRLKLSKK (75 aa). Residues 700 to 734 are disordered; the sequence is GRLKLSKKEATPPPESTAMKEGRAHRPSRRRESAR. Over residues 717 to 734 the composition is skewed to basic and acidic residues; that stretch reads AMKEGRAHRPSRRRESAR.

Belongs to the polyribonucleotide nucleotidyltransferase family. Mg(2+) serves as cofactor.

The protein localises to the cytoplasm. It carries out the reaction RNA(n+1) + phosphate = RNA(n) + a ribonucleoside 5'-diphosphate. In terms of biological role, involved in mRNA degradation. Catalyzes the phosphorolysis of single-stranded polyribonucleotides processively in the 3'- to 5'-direction. The polypeptide is Polyribonucleotide nucleotidyltransferase (Pelotomaculum thermopropionicum (strain DSM 13744 / JCM 10971 / SI)).